Here is a 259-residue protein sequence, read N- to C-terminus: Glandular kallikrein-10 (259 aa).

A signal peptide spans 1–18 (MWFLILFLALSLGGIDAA). The propeptide at 19 to 24 (PPGQSR) is activation peptide. Residues 25–256 (IVGGYKCEKN…FTSWIKEVMK (232 aa)) enclose the Peptidase S1 domain. 5 disulfide bridges follow: Cys31–Cys171, Cys48–Cys64, Cys150–Cys217, Cys182–Cys196, and Cys207–Cys232. The Charge relay system role is filled by His63. N-linked (GlcNAc...) asparagine glycosylation is found at Asn91 and Asn106. Residue Asp118 is the Charge relay system of the active site. Residue Ser211 is the Charge relay system of the active site.

Belongs to the peptidase S1 family. Kallikrein subfamily. In terms of assembly, heterodimer of a light chain and heavy chain linked by a disulfide bond. Probably N- and O-glycosylated. Kidney and submandibular gland, where it is found in the granular convoluted tubule and striated duct cells. It is likely that the enzyme is mainly synthesized in the granular convoluted tubules and then transferred to other tissues by release into the vasculature or interstitial space.

The catalysed reaction is Preferential cleavage of Arg-|-Xaa bonds in small molecule substrates. Highly selective action to release kallidin (lysyl-bradykinin) from kininogen involves hydrolysis of Met-|-Xaa or Leu-|-Xaa.. Glandular kallikreins cleave Met-Lys and Arg-Ser bonds in kininogen to release Lys-bradykinin. This protein may be involved in the regulation of renal function. The protein is Glandular kallikrein-10 (Klk10) of Rattus norvegicus (Rat).